The following is a 347-amino-acid chain: UDP-3-O-acylglucosamine N-acyltransferase (347 aa).

Catalysis depends on H240, which acts as the Proton acceptor.

Belongs to the transferase hexapeptide repeat family. LpxD subfamily. Homotrimer.

The enzyme catalyses a UDP-3-O-[(3R)-3-hydroxyacyl]-alpha-D-glucosamine + a (3R)-hydroxyacyl-[ACP] = a UDP-2-N,3-O-bis[(3R)-3-hydroxyacyl]-alpha-D-glucosamine + holo-[ACP] + H(+). The protein operates within bacterial outer membrane biogenesis; LPS lipid A biosynthesis. Functionally, catalyzes the N-acylation of UDP-3-O-acylglucosamine using 3-hydroxyacyl-ACP as the acyl donor. Is involved in the biosynthesis of lipid A, a phosphorylated glycolipid that anchors the lipopolysaccharide to the outer membrane of the cell. This is UDP-3-O-acylglucosamine N-acyltransferase from Hydrogenovibrio crunogenus (strain DSM 25203 / XCL-2) (Thiomicrospira crunogena).